The following is a 395-amino-acid chain: NAD(P)H-quinone oxidoreductase subunit H, chloroplastic (395 aa).

Belongs to the complex I 49 kDa subunit family. As to quaternary structure, NDH is composed of at least 16 different subunits, 5 of which are encoded in the nucleus.

It localises to the plastid. It is found in the chloroplast thylakoid membrane. It carries out the reaction a plastoquinone + NADH + (n+1) H(+)(in) = a plastoquinol + NAD(+) + n H(+)(out). The enzyme catalyses a plastoquinone + NADPH + (n+1) H(+)(in) = a plastoquinol + NADP(+) + n H(+)(out). Its function is as follows. NDH shuttles electrons from NAD(P)H:plastoquinone, via FMN and iron-sulfur (Fe-S) centers, to quinones in the photosynthetic chain and possibly in a chloroplast respiratory chain. The immediate electron acceptor for the enzyme in this species is believed to be plastoquinone. Couples the redox reaction to proton translocation, and thus conserves the redox energy in a proton gradient. This Coffea arabica (Arabian coffee) protein is NAD(P)H-quinone oxidoreductase subunit H, chloroplastic.